The chain runs to 417 residues: Probable secreted beta-glucosidase PSU1 (417 aa).

An N-terminal signal peptide occupies residues 1 to 18 (MRFFETLALALLTTGALA).

It belongs to the SUN family.

The protein resides in the secreted. It localises to the cell wall. In terms of biological role, involved in cell wall synthesis. May be required for the activation of 1,3-beta-glucan synthase. This chain is Probable secreted beta-glucosidase PSU1 (psu1), found in Schizosaccharomyces pombe (strain 972 / ATCC 24843) (Fission yeast).